The primary structure comprises 179 residues: Large ribosomal subunit protein uL5 (179 aa).

This sequence belongs to the universal ribosomal protein uL5 family. As to quaternary structure, part of the 50S ribosomal subunit; part of the 5S rRNA/L5/L18/L25 subcomplex. Contacts the 5S rRNA and the P site tRNA. Forms a bridge to the 30S subunit in the 70S ribosome.

Functionally, this is one of the proteins that bind and probably mediate the attachment of the 5S RNA into the large ribosomal subunit, where it forms part of the central protuberance. In the 70S ribosome it contacts protein S13 of the 30S subunit (bridge B1b), connecting the 2 subunits; this bridge is implicated in subunit movement. Contacts the P site tRNA; the 5S rRNA and some of its associated proteins might help stabilize positioning of ribosome-bound tRNAs. The protein is Large ribosomal subunit protein uL5 of Dictyoglomus turgidum (strain DSM 6724 / Z-1310).